A 124-amino-acid chain; its full sequence is MAVVKKKRNVVVGRVHICATYNNVIVTIADQQGHVLVTTSAGACNFKGSKKSTPYAAQETVARAVKAVIERNGMKTVSVCISGPGAGREAAIRAVQACNLNVTSIKDVTKLPHNGCKLPKRRRV.

It belongs to the universal ribosomal protein uS11 family. Part of the 30S ribosomal subunit. Interacts with proteins S7 and S18. Binds to IF-3.

In terms of biological role, located on the platform of the 30S subunit, it bridges several disparate RNA helices of the 16S rRNA. Forms part of the Shine-Dalgarno cleft in the 70S ribosome. This Anaplasma phagocytophilum (strain HZ) protein is Small ribosomal subunit protein uS11.